A 410-amino-acid polypeptide reads, in one-letter code: MASVGTLPASSMATKQSNASICAEKLPEGINEMKIKDDKEMEAAVVDGNGTETGHIIVTTIGGKNGQPKQTISYMAERIVGQGSFGIVFQAKCLETGETVAIKKVLQDKRYKNRELQTMRLLDHPNVVSLKHCFFSTTEKDELYLNLVLEYVPETVYRVSKHYSRANQRMPIIYVKLYTYQICRALAYIHGGVGVCHRDIKPQNLLVNPHTHQVKLCDFGSAKVLVKGEPNISYICSRYYRAPELIFGATEYTTTIDIWSAGCVLAELLLGQPLFPGESGVDQLVEIIKVLGTPTREEIKCMNPNYTEFKFPQIKAHPWHKIFHKRTPPEAVDLVSRLLQYSPNLRSTAMEAIVHPFFDELRDPNTRLPNGRALPPLFNFKPQELKGASLELLSKLIPDHARKQCSFLAL.

The residue at position 2 (Ala-2) is an N-acetylalanine. Residues 74–358 (YMAERIVGQG…AMEAIVHPFF (285 aa)) enclose the Protein kinase domain. ATP contacts are provided by residues 80–88 (VGQGSFGIV) and Lys-103. Asp-199 serves as the catalytic Proton acceptor. Tyr-234 is subject to Phosphotyrosine.

Belongs to the protein kinase superfamily. CMGC Ser/Thr protein kinase family. GSK-3 subfamily. As to quaternary structure, binds to KIB1. Autophosphorylated mainly on threonine and serine residues.

The catalysed reaction is L-seryl-[protein] + ATP = O-phospho-L-seryl-[protein] + ADP + H(+). The enzyme catalyses L-threonyl-[protein] + ATP = O-phospho-L-threonyl-[protein] + ADP + H(+). In terms of biological role, may mediate extracellular signals to regulate transcription in differentiating cells. This is Shaggy-related protein kinase epsilon (ASK5) from Arabidopsis thaliana (Mouse-ear cress).